Reading from the N-terminus, the 241-residue chain is GTP cyclohydrolase 1 (241 aa).

Residues 1–11 (MEKPRGVRCTN) constitute a propeptide that is removed on maturation. The tract at residues 1 to 58 (MEKPRGVRCTNGFPERELPRPGASRPAEKSRPPEAKGAQPADAWKAGRPRSEEDNELN) is disordered. Phosphoserine is present on residues S51 and S72. Zn(2+) contacts are provided by C132, H135, and C203.

Belongs to the GTP cyclohydrolase I family. Toroid-shaped homodecamer, composed of two pentamers of five dimers. Interacts with AHSA1 and GCHFR/GFRP. Post-translationally, phosphorylated.

It localises to the cytoplasm. The protein localises to the nucleus. The catalysed reaction is GTP + H2O = 7,8-dihydroneopterin 3'-triphosphate + formate + H(+). Its pathway is cofactor biosynthesis; 7,8-dihydroneopterin triphosphate biosynthesis; 7,8-dihydroneopterin triphosphate from GTP: step 1/1. GTP shows a positive allosteric effect, and tetrahydrobiopterin inhibits the enzyme activity. Zinc is required for catalytic activity. Inhibited by Mg(2+). Functionally, may positively regulate nitric oxide synthesis in endothelial cells. May be involved in dopamine synthesis. May modify pain sensitivity and persistence. The protein is GTP cyclohydrolase 1 (Gch1) of Rattus norvegicus (Rat).